A 273-amino-acid chain; its full sequence is NAD-dependent protein deacylase (273 aa).

The Deacetylase sirtuin-type domain maps to 20–272 (RERLRQRIFF…PEFVEKLLKG (253 aa)). An NAD(+)-binding site is contributed by 48–67 (GAGISAESGIRTFRAADGLW). Substrate is bound by residues Tyr92 and Arg95. Position 129 to 132 (129 to 132 (QNID)) interacts with NAD(+). The active-site Proton acceptor is the His147. Zn(2+) is bound by residues Cys155 and Cys174. NAD(+) contacts are provided by residues 214–216 (GTS), 240–242 (NLE), and Ala258.

The protein belongs to the sirtuin family. Class III subfamily. Zn(2+) is required as a cofactor.

It localises to the cytoplasm. The catalysed reaction is N(6)-acetyl-L-lysyl-[protein] + NAD(+) + H2O = 2''-O-acetyl-ADP-D-ribose + nicotinamide + L-lysyl-[protein]. The enzyme catalyses N(6)-succinyl-L-lysyl-[protein] + NAD(+) + H2O = 2''-O-succinyl-ADP-D-ribose + nicotinamide + L-lysyl-[protein]. It carries out the reaction N(6)-(2-hydroxyisobutanoyl)-L-lysyl-[protein] + NAD(+) + H2O = 2''-O-(2-hydroxyisobutanoyl)-ADP-D-ribose + nicotinamide + L-lysyl-[protein]. Functionally, NAD-dependent lysine deacetylase that specifically removes acetyl groups on target proteins. Also acts as a protein-lysine deacylase by mediating protein desuccinylation and de-2-hydroxyisobutyrylation. Modulates the activities of several proteins which are inactive in their acylated form. The protein is NAD-dependent protein deacylase of Escherichia coli O157:H7.